We begin with the raw amino-acid sequence, 78 residues long: Large ribosomal subunit protein bL28 (78 aa).

A disordered region spans residues 1-20; that stretch reads MSRVCQVTGKRPVTGNNRSH.

The protein belongs to the bacterial ribosomal protein bL28 family.

The sequence is that of Large ribosomal subunit protein bL28 from Vibrio atlanticus (strain LGP32) (Vibrio splendidus (strain Mel32)).